The primary structure comprises 376 residues: Acetylornithine aminotransferase (376 aa).

Residues 96–97 (GT) and F128 each bind pyridoxal 5'-phosphate. R131 contributes to the N(2)-acetyl-L-ornithine binding site. 213–216 (DEVQ) contacts pyridoxal 5'-phosphate. N6-(pyridoxal phosphate)lysine is present on K242. S270 is a binding site for N(2)-acetyl-L-ornithine. Residue T271 coordinates pyridoxal 5'-phosphate.

Belongs to the class-III pyridoxal-phosphate-dependent aminotransferase family. ArgD subfamily. In terms of assembly, homodimer. Requires pyridoxal 5'-phosphate as cofactor.

The protein resides in the cytoplasm. The catalysed reaction is N(2)-acetyl-L-ornithine + 2-oxoglutarate = N-acetyl-L-glutamate 5-semialdehyde + L-glutamate. It participates in amino-acid biosynthesis; L-arginine biosynthesis; N(2)-acetyl-L-ornithine from L-glutamate: step 4/4. The polypeptide is Acetylornithine aminotransferase (Aquifex aeolicus (strain VF5)).